A 182-amino-acid polypeptide reads, in one-letter code: Methyl-CpG-binding domain-containing protein 5 (182 aa).

Disordered stretches follow at residues 1–56 (MSNG…GTVD) and 80–126 (HGTP…KPLN). The MBD domain maps to 25–101 (KRATPGDDNW…ENGDSHSEHS (77 aa)). The segment covering 92 to 105 (ENGDSHSEHSEGRG) has biased composition (basic and acidic residues). Over residues 106 to 115 (SARRQTKSNK) the composition is skewed to basic residues.

Homodimer and heterodimer with MBD6. Interacts with DDM1 via its MBD domain. As to expression, mostly expressed in flowers, and, to a lower extent, in seedlings, buds, stems and mature seeds, but barely in roots, exclusively in root meristem cells at tips (at protein level).

The protein resides in the nucleus. It is found in the chromosome. Its function is as follows. Transcriptional regulator that binds CpG islands in promoters where the DNA is methylated at position 5 of cytosine within CpG dinucleotides. In addition, binds specifically methylated m(5)CpNpN but not m(5)CpNpG (N is A, T or C). Plays probably a role in gene silencing. This chain is Methyl-CpG-binding domain-containing protein 5 (MBD5), found in Arabidopsis thaliana (Mouse-ear cress).